The sequence spans 285 residues: Mitochondrial substrate carrier family protein L (285 aa).

The Mitochondrial intermembrane portion of the chain corresponds to 1–13 (MIASKETKEKIRN). 3 Solcar repeats span residues 8–94 (KEKI…VKSK), 103–185 (ISLG…AQRY), and 193–282 (MTMG…VMKF). A helical membrane pass occupies residues 14–34 (FIGGFASGAASTLAGHPFDTL). The Mitochondrial matrix portion of the chain corresponds to 35–69 (KVRLQTEGSTGRFRGLAHCFTTTIKEEGFFALYKG). The chain crosses the membrane as a helical span at residues 70 to 90 (VTPPLLGMSIINSCMFGAMNI). The Mitochondrial intermembrane portion of the chain corresponds to 91–102 (VKSKIHTDKSTP). Residues 103 to 123 (ISLGEIMVSGAITGWIVSFVA) form a helical membrane-spanning segment. The Mitochondrial matrix segment spans residues 124 to 156 (CPIETVKSKLQVQYTGVKLYNGPIDCIKKIGIR). Residues 157–177 (GLYKALIPTGFQRNSLYAYFG) traverse the membrane as a helical segment. Topologically, residues 178-198 (CYELAQRYLRREDGSMTMGRS) are mitochondrial intermembrane. The helical transmembrane segment at 199 to 219 (FIAGGIAGTGFWLTNFPFDVI) threads the bilayer. The Mitochondrial matrix portion of the chain corresponds to 220-256 (RSRIMTMPYNESPPRYKGMIDCAKHIYRVDGLKGFWK). A helical transmembrane segment spans residues 257-277 (GFSPCLLRTFPANGATFVAYE). Residues 278 to 285 (CVMKFFPM) lie on the Mitochondrial intermembrane side of the membrane.

The protein belongs to the mitochondrial carrier (TC 2.A.29) family.

The protein resides in the mitochondrion inner membrane. Functionally, mitochondrial solute carriers shuttle metabolites, nucleotides, and cofactors through the mitochondrial inner membrane. This chain is Mitochondrial substrate carrier family protein L (mcfL), found in Dictyostelium discoideum (Social amoeba).